The following is a 356-amino-acid chain: Phosphate acyltransferase (356 aa).

It belongs to the PlsX family. In terms of assembly, homodimer. Probably interacts with PlsY.

The protein resides in the cytoplasm. The enzyme catalyses a fatty acyl-[ACP] + phosphate = an acyl phosphate + holo-[ACP]. Its pathway is lipid metabolism; phospholipid metabolism. In terms of biological role, catalyzes the reversible formation of acyl-phosphate (acyl-PO(4)) from acyl-[acyl-carrier-protein] (acyl-ACP). This enzyme utilizes acyl-ACP as fatty acyl donor, but not acyl-CoA. The protein is Phosphate acyltransferase of Escherichia coli (strain 55989 / EAEC).